Here is a 274-residue protein sequence, read N- to C-terminus: 3',5'-cyclic adenosine monophosphate phosphodiesterase CpdA (274 aa).

Asp-21, His-23, Asp-63, Asn-93, His-163, His-202, and His-204 together coordinate Fe cation. Residues His-23, Asp-63, and Asn-93–His-94 each bind AMP. His-204 lines the AMP pocket.

This sequence belongs to the cyclic nucleotide phosphodiesterase class-III family. It depends on Fe(2+) as a cofactor.

It carries out the reaction 3',5'-cyclic AMP + H2O = AMP + H(+). In terms of biological role, hydrolyzes cAMP to 5'-AMP. Plays an important regulatory role in modulating the intracellular concentration of cAMP, thereby influencing cAMP-dependent processes. May coordinate responses to nutritional stress, ensuring optimal competence development. The chain is 3',5'-cyclic adenosine monophosphate phosphodiesterase CpdA from Haemophilus influenzae (strain ATCC 51907 / DSM 11121 / KW20 / Rd).